The chain runs to 219 residues: Elongation factor Ts (219 aa).

The tract at residues 82–85 (TDFV) is involved in Mg(2+) ion dislocation from EF-Tu.

It belongs to the EF-Ts family.

Its subcellular location is the cytoplasm. Its function is as follows. Associates with the EF-Tu.GDP complex and induces the exchange of GDP to GTP. It remains bound to the aminoacyl-tRNA.EF-Tu.GTP complex up to the GTP hydrolysis stage on the ribosome. This Anaeromyxobacter sp. (strain Fw109-5) protein is Elongation factor Ts.